We begin with the raw amino-acid sequence, 304 residues long: Cytochrome c biogenesis protein CcsA (304 aa).

The next 8 membrane-spanning stretches (helical) occupy residues 11–31 (SLGF…FWAV), 37–57 (AGLV…QLIL), 63–83 (GHFP…ACTL), 96–116 (IVAA…SFAL), 141–161 (VIMV…AVLV), 212–232 (TITV…VWAN), 246–263 (TWAL…HTRL), and 275–295 (VAVV…LLGI).

It belongs to the CcmF/CycK/Ccl1/NrfE/CcsA family. In terms of assembly, may interact with ccs1.

It localises to the cellular thylakoid membrane. Required during biogenesis of c-type cytochromes (cytochrome c6 and cytochrome f) at the step of heme attachment. This is Cytochrome c biogenesis protein CcsA from Synechococcus sp. (strain CC9605).